Here is a 194-residue protein sequence, read N- to C-terminus: UPF0301 protein FTA_1286 (194 aa).

This sequence belongs to the UPF0301 (AlgH) family.

This chain is UPF0301 protein FTA_1286, found in Francisella tularensis subsp. holarctica (strain FTNF002-00 / FTA).